A 396-amino-acid polypeptide reads, in one-letter code: MAPKKAGDGVKAHPIIGRFGTSLKIGIVGLPNVGKSTFFNVLTKSQAAAENFPFCTIDPNESRVPVPDDRFDFLCQYHKPPSKIPAFLNVVDIAGLVKGAHTGQGLGNSFLSHINACDGIFHLMRAFEDDDITHVEGSVDPVRDIEIIHEELRLKDEELITQSIDKLEKVAVRGGDKKLKPEYDVMCKIKTWVIDEKKAVRFYHDWNDKEIDVLNKHLFFTSKPMIYLVNLSEKDYIRKKNKWLIKIKEWVDKHDPGALVIPFSGALELKLQDMSAEEKQKYLEENMTQSALPKIIKAGYAALQLEYFFTAGPDEVRAWTIRKGTKAPQAAGKIHTDFEKGFIMAEVMKYEDFKEGGSEAAVKAAGKYRQQGRNYIVEDGDIIFFKFNTPQQPKKK.

Residues Leu-23–Leu-283 form the OBG-type G domain. Asn-32 to Thr-37 is a binding site for ATP. Ser-36 and Thr-56 together coordinate Mg(2+). Leu-231 contacts ATP. The Nuclear export signal motif lies at Leu-267–Met-274. A TGS domain is found at Gln-304–Phe-387.

The protein belongs to the TRAFAC class OBG-HflX-like GTPase superfamily. OBG GTPase family. YchF/OLA1 subfamily. As to quaternary structure, monomer. The cofactor is Mg(2+).

The protein resides in the cytoplasm. It is found in the nucleus. It localises to the nucleolus. Functionally, hydrolyzes ATP, and can also hydrolyze GTP with lower efficiency. Has lower affinity for GTP. The protein is Obg-like ATPase 1 of Gallus gallus (Chicken).